Here is an 807-residue protein sequence, read N- to C-terminus: Serine/threonine-protein kinase B-raf (807 aa).

2 stretches are compositionally biased toward low complexity: residues 1-15 and 110-128; these read MAAL…GASL and SVSS…SSSL. 2 disordered regions span residues 1 to 36 and 104 to 128; these read MAAL…YAGS and GNGT…SSSL. The RBD domain maps to 155 to 227; sequence PIVRVFLPNK…TGEELHVEVL (73 aa). Residues 234–280 form a Phorbol-ester/DAG-type zinc finger; that stretch reads THNFVRKTFFTLAFCDFCRKLLFQGFRCQTCGYKFHQRCSTEVPLMC. Residues His-235, Cys-248, Cys-251, Cys-261, Cys-264, His-269, Cys-272, and Cys-280 each contribute to the Zn(2+) site. The segment covering 303–313 has biased composition (polar residues); that stretch reads EETTLGETTPA. 2 disordered regions span residues 303–372 and 434–494; these read EETT…VHIN and STAG…EIPD. The span at 314–328 shows a compositional bias: low complexity; it reads SGSYPSVPPSDSVGP. Composition is skewed to basic and acidic residues over residues 348–363 and 463–487; these read PADE…RDRS and QRER…RDSS. One can recognise a Protein kinase domain in the interval 497-757; sequence ITVGQRIGSG…PQILASIELL (261 aa). ATP is bound by residues 503–511 and Lys-523; that span reads IGSGSFGTV. Asp-616 acts as the Proton acceptor in catalysis. The residue at position 790 (Ser-790) is a Phosphoserine; by MAPK1. Thr-793 is modified (phosphothreonine; by MAPK1).

Belongs to the protein kinase superfamily. TKL Ser/Thr protein kinase family. RAF subfamily. Zn(2+) is required as a cofactor. Phosphorylated. In terms of tissue distribution, expressed preferentially in neural tissue.

The protein localises to the nucleus. It is found in the cytoplasm. Its subcellular location is the cell membrane. The enzyme catalyses L-seryl-[protein] + ATP = O-phospho-L-seryl-[protein] + ADP + H(+). The catalysed reaction is L-threonyl-[protein] + ATP = O-phospho-L-threonyl-[protein] + ADP + H(+). With respect to regulation, in quiescent cells, maintained in an inactive state via an intramolecular interaction between the protein kinase and N-terminal domains. Following mitogen-mediated cell activation, binds via its RGB domain to active HRAS (GTP-bound) which releases the inhibitory intramolecular interaction between the two domains. This allows the MAP2K1-mediated dimerization of KSR1 or KSR2, and BRAF which activates BRAF. Its function is as follows. Protein kinase involved in the activation of the MAP signaling cascade. May play a role in transducing specific signals in neural cells. This chain is Serine/threonine-protein kinase B-raf, found in Coturnix japonica (Japanese quail).